A 114-amino-acid polypeptide reads, in one-letter code: T cell receptor beta variable 6-2 (114 aa).

A signal peptide spans 1–21 (MSLGLLCCGAFSLLWAGPVNA). The region spanning 22–114 (GVTQTPKFRV…TSVYFCASSY (93 aa)) is the Ig-like domain. A disulfide bond links Cys-42 and Cys-110. N-linked (GlcNAc...) asparagine glycosylation occurs at Asn-84.

Alpha-beta TR is a heterodimer composed of an alpha and beta chain; disulfide-linked. The alpha-beta TR is associated with the transmembrane signaling CD3 coreceptor proteins to form the TR-CD3 (TcR or TCR). The assembly of alpha-beta TR heterodimers with CD3 occurs in the endoplasmic reticulum where a single alpha-beta TR heterodimer associates with one CD3D-CD3E heterodimer, one CD3G-CD3E heterodimer and one CD247 homodimer forming a stable octameric structure. CD3D-CD3E and CD3G-CD3E heterodimers preferentially associate with TR alpha and TR beta chains, respectively. The association of the CD247 homodimer is the last step of TcR assembly in the endoplasmic reticulum and is required for transport to the cell surface.

The protein localises to the cell membrane. Its function is as follows. V region of the variable domain of T cell receptor (TR) beta chain that participates in the antigen recognition. Alpha-beta T cell receptors are antigen specific receptors which are essential to the immune response and are present on the cell surface of T lymphocytes. Recognize peptide-major histocompatibility (MH) (pMH) complexes that are displayed by antigen presenting cells (APC), a prerequisite for efficient T cell adaptive immunity against pathogens. Binding of alpha-beta TR to pMH complex initiates TR-CD3 clustering on the cell surface and intracellular activation of LCK that phosphorylates the ITAM motifs of CD3G, CD3D, CD3E and CD247 enabling the recruitment of ZAP70. In turn ZAP70 phosphorylates LAT, which recruits numerous signaling molecules to form the LAT signalosome. The LAT signalosome propagates signal branching to three major signaling pathways, the calcium, the mitogen-activated protein kinase (MAPK) kinase and the nuclear factor NF-kappa-B (NF-kB) pathways, leading to the mobilization of transcription factors that are critical for gene expression and essential for T cell growth and differentiation. The T cell repertoire is generated in the thymus, by V-(D)-J rearrangement. This repertoire is then shaped by intrathymic selection events to generate a peripheral T cell pool of self-MH restricted, non-autoaggressive T cells. Post-thymic interaction of alpha-beta TR with the pMH complexes shapes TR structural and functional avidity. This is T cell receptor beta variable 6-2 from Homo sapiens (Human).